We begin with the raw amino-acid sequence, 294 residues long: Tetraspanin-15 (294 aa).

The Cytoplasmic portion of the chain corresponds to 1 to 23 (MPRGDSEQVRYCARFSYLWLKFS). The helical transmembrane segment at 24–44 (LIIYSTVFWLIGGLVLSVGIY) threads the bilayer. At 45–62 (AEAERQKYKTLESAFLAP) the chain is on the extracellular side. Residues 63 to 83 (AIILILLGVVMFIVSFIGVLA) form a helical membrane-spanning segment. Topologically, residues 84–94 (SLRDNLCLLQS) are cytoplasmic. The helical transmembrane segment at 95–115 (FMYILGICLVMELIGGIVALI) threads the bilayer. At 116-235 (FRNQTIDFLN…WFMDNYTIMA (120 aa)) the chain is on the extracellular side. A glycan (N-linked (GlcNAc...) asparagine) is linked at Asn118. Disulfide bonds link Cys154/Cys219, Cys155/Cys185, Cys171/Cys179, and Cys186/Cys198. N-linked (GlcNAc...) asparagine glycans are attached at residues Asn189 and Asn230. Residues 236–256 (GLLLGILLPQFLGVLLTLLYI) traverse the membrane as a helical segment. The Cytoplasmic portion of the chain corresponds to 257-294 (TRVEDIILEHSVTDGLLGPGAKSRTDTAGTGCCLCYPD).

The protein belongs to the tetraspanin (TM4SF) family. In terms of assembly, interacts with ADAM10; the interaction influences ADAM10 substrate specificity, endocytosis and turnover. Palmitoylated.

The protein resides in the cell membrane. The protein localises to the late endosome membrane. In terms of biological role, part of TspanC8 subgroup, composed of 6 members that interact with the transmembrane metalloprotease ADAM10. This interaction is required for ADAM10 exit from the endoplasmic reticulum and for enzymatic maturation and trafficking to the cell surface as well as substrate specificity. Different TspanC8/ADAM10 complexes have distinct substrates. Promotes ADAM10-mediated cleavage of CDH2. Negatively regulates ligand-induced Notch activity probably by regulating ADAM10 activity. The sequence is that of Tetraspanin-15 (Tspan15) from Mus musculus (Mouse).